A 923-amino-acid polypeptide reads, in one-letter code: Periplasmic nitrate reductase (923 aa).

The tat-type signal signal peptide spans 1 to 30 (MNRRDFIKNTAIASAASVAGLSVPSSMLGA). Positions 34–90 (WKWDKAVCRFCGTGCGIMIARKDGKIVATKGDPAAPVNRGLNCIKGYFNAKIMYGED) constitute a 4Fe-4S Mo/W bis-MGD-type domain. Residues Cys41, Cys44, Cys48, and Cys76 each coordinate [4Fe-4S] cluster. Mo-bis(molybdopterin guanine dinucleotide) contacts are provided by residues Lys78, Gln146, Asn171, Cys175, 208 to 215 (WGANMAEM), Met416, Gln420, Asn526, 551 to 552 (SD), Lys574, Asp601, and 813 to 822 (TGRVLEHWHS). Trp889 lines the substrate pocket. 2 residues coordinate Mo-bis(molybdopterin guanine dinucleotide): Asn897 and Lys914.

The protein belongs to the prokaryotic molybdopterin-containing oxidoreductase family. NasA/NapA/NarB subfamily. In terms of assembly, component of the periplasmic nitrate reductase NapAB complex composed of NapA and NapB. It depends on [4Fe-4S] cluster as a cofactor. Mo-bis(molybdopterin guanine dinucleotide) is required as a cofactor. Predicted to be exported by the Tat system. The position of the signal peptide cleavage has not been experimentally proven.

Its subcellular location is the periplasm. The enzyme catalyses 2 Fe(II)-[cytochrome] + nitrate + 2 H(+) = 2 Fe(III)-[cytochrome] + nitrite + H2O. Its function is as follows. Catalytic subunit of the periplasmic nitrate reductase complex NapAB. Receives electrons from NapB and catalyzes the reduction of nitrate to nitrite. This is Periplasmic nitrate reductase from Campylobacter jejuni subsp. jejuni serotype O:23/36 (strain 81-176).